We begin with the raw amino-acid sequence, 499 residues long: Cytochrome P450 71A27 (499 aa).

The chain crosses the membrane as a helical span at residues 3 to 23 (MILISLCLTTLLAFLFLKPLL). Heme is bound at residue cysteine 438.

This sequence belongs to the cytochrome P450 family. Requires heme as cofactor.

The protein localises to the membrane. This is Cytochrome P450 71A27 (CYP71A27) from Arabidopsis thaliana (Mouse-ear cress).